The chain runs to 94 residues: Neutrophil antibiotic peptide NP-1 (94 aa).

The first 19 residues, 1 to 19, serve as a signal peptide directing secretion; the sequence is MRTLTLLTALLLLALHTQA. A propeptide spanning residues 20–62 is cleaved from the precursor; sequence KSPQGTAEEAPDQEQLVMEDQDISISFGGDKGTALQDADVKAG. Cystine bridges form between Cys-65–Cys-93, Cys-67–Cys-82, and Cys-72–Cys-92. Tyr-84 carries the phosphotyrosine modification.

The protein belongs to the alpha-defensin family. As to expression, highest expression in bone marrow and to a much lesser extent in small intestine.

Its subcellular location is the secreted. Active in vitro against S.aureus, fungi, Gram-positive and Gram-negative bacteria and to a lesser extent against an enveloped virus. This Rattus norvegicus (Rat) protein is Neutrophil antibiotic peptide NP-1.